Reading from the N-terminus, the 503-residue chain is WD repeat-containing protein 55 homolog (503 aa).

2 disordered regions span residues 1–21 (MHTH…DLDD) and 35–132 (ALVG…DDLD). Composition is skewed to acidic residues over residues 12-21 (DADELDDLDD), 40-50 (DVSDSDIDEHD), and 78-96 (NAED…DEAE). WD repeat units lie at residues 157 to 196 (KLED…NKLL), 201 to 242 (VHSK…KLYE), 244 to 282 (AHDD…PIFE), 285 to 324 (EVED…LYVQ), 327 to 366 (PYEE…YHCD), and 411 to 450 (QHNM…DFGD). Residues 483–503 (TKEDEDNADNNDAAAGPSNSA) form a disordered region.

This sequence belongs to the WD repeat WDR55 family.

The sequence is that of WD repeat-containing protein 55 homolog from Drosophila persimilis (Fruit fly).